Here is a 757-residue protein sequence, read N- to C-terminus: Catalase-peroxidase (757 aa).

A cross-link (tryptophyl-tyrosyl-methioninium (Trp-Tyr) (with M-274)) is located at residues 101-248 (WHSAGTYRIG…LAAVQMGLIY (148 aa)). The active-site Proton acceptor is the H102. The segment at 210 to 231 (SEGVHHPDEHSGAKEKASKNSD) is disordered. Residues 212-231 (GVHHPDEHSGAKEKASKNSD) are compositionally biased toward basic and acidic residues. The segment at residues 248–274 (YVNPEGPDGRPDPLASARDIRETFARM) is a cross-link (tryptophyl-tyrosyl-methioninium (Tyr-Met) (with W-101)). Heme b is bound at residue H289. The disordered stretch occupies residues 293–312 (KTHGAAPADNVGPEPEAGEL).

The protein belongs to the peroxidase family. Peroxidase/catalase subfamily. In terms of assembly, homodimer or homotetramer. Heme b is required as a cofactor. Post-translationally, formation of the three residue Trp-Tyr-Met cross-link is important for the catalase, but not the peroxidase activity of the enzyme.

The enzyme catalyses H2O2 + AH2 = A + 2 H2O. The catalysed reaction is 2 H2O2 = O2 + 2 H2O. Its function is as follows. Bifunctional enzyme with both catalase and broad-spectrum peroxidase activity. This chain is Catalase-peroxidase, found in Xylella fastidiosa (strain M12).